The following is a 258-amino-acid chain: Snake venom serine protease PTLE1 (258 aa).

The signal sequence occupies residues 1-18 (MVLIRVLANLLILQLSYA). Residues 19-24 (QKSSEL) constitute a propeptide that is removed on maturation. One can recognise a Peptidase S1 domain in the interval 25–249 (VIGGDECNIN…YTDWIENIIA (225 aa)). Intrachain disulfides connect Cys31-Cys163, Cys50-Cys66, Cys98-Cys256, Cys142-Cys210, Cys174-Cys189, and Cys200-Cys225. N-linked (GlcNAc...) asparagine glycosylation is present at Asn44. The active-site Charge relay system is the His65. 2 N-linked (GlcNAc...) asparagine glycosylation sites follow: Asn79 and Asn103. The active-site Charge relay system is Asp110. A glycan (N-linked (GlcNAc...) asparagine) is linked at Asn121. The active-site Charge relay system is the Ser204.

It belongs to the peptidase S1 family. Snake venom subfamily. Monomer. In terms of tissue distribution, expressed by the venom gland.

It is found in the secreted. Functionally, snake venom serine protease that may act in the hemostasis system of the prey. This is Snake venom serine protease PTLE1 from Gloydius halys (Chinese water mocassin).